The chain runs to 1099 residues: MSSQTKFKKDKEIIAEYEAQIKEIRTQLVEQFKCLEQQSESRLQLLQDLQEFFRRKAEIELEYSRSLEKLAERFSSKIRSSREHQFKKDQYLLSPVNCWYLVLHQTRRESRDHATLNDIFMNNVIVRLSQISEDVIRLFKKSKEIGLQMHEELLKVTNELYTVMKTYHMYHAESISAESKLKEAEKQEEKQFNKSGELSMNLLRHEDRPQRRSSVKKIEKMKEKRQAKYSENKLKCTKARNDYLLNLAATNAAISKYYIHDVSDLIDCCDLGFHASLARTFRTYLSAEYNLETSRHEGLDVIENAVDNLDSRSDKHTVMDMCSQVFCPPLKFEFQPHMGDEVCQVSAQQPVQTELLMRYHQLQSRLATLKIENEEVRKTLDATMQTLQDMLTVEDFDVSDAFQHSRSTESIKSAASETYMSKINIAKRRANQQETEMFYFTKFKEYVNGSNLITKLQAKHDLLKQTLGEGERAECGTTRPPCLPPKPQKMRRPRPLSVYSHKLFNGSMEAFIKDSGQAIPLVAESCIRFINLYGLQQQGIFRVPGSQVEVNDIKNSFERGEDPLVDDQNERDINSVAGVLKLYFRGLENPLFPKERFQDLISTIKLENPADRVHPIQQILITLPRVVIVVMRYLFAFLNHLSQYSDENMMDPYNLAICFGPTLMHIPDGQDPVSCQAHVNEVIKTIIIHHEAIFPSPRELEGPVYEKCMAGGEEYCDSPHSEPGTIDEVDHDNGTEPHTSDEEVEQIEAIAKFDYVGRSPRELSFKKGASLLLYHRASEDWWEGRHNGVDGLIPHQYIVVQDMDDAFSDSLSQKADSEASSGPLLDDKASSKNDLQSPTEHISDYGFGGVMGRVRLRSDGAAIPRRRSGGDTHSPPRGLGPSIDTPPRAAACPSSPHKIPLSRGRIESPEKRRMATFGSAGSINYPDKKALTEGLSMRSTCGSTRHSSLGDHKSLEAEALAEDIEKTMSTALHELRELERQNTVKQAPDVVLDTLEPLKNPPGPISSEPASPLHTIVIRDPDAAMRRSSSSSTEMMTTFKPALSARLAGAQLRPPPMRPVRPVVQHRSSSSSSSGVGSPAVTPTEKMFPNSSSDKSGTM.

The 296-residue stretch at 19–314 (AQIKEIRTQL…AVDNLDSRSD (296 aa)) folds into the F-BAR domain. A coiled-coil region spans residues 352–392 (QTELLMRYHQLQSRLATLKIENEEVRKTLDATMQTLQDMLT). The segment at 470 to 493 (GERAECGTTRPPCLPPKPQKMRRP) is disordered. A Rho-GAP domain is found at 506-694 (GSMEAFIKDS…TIIIHHEAIF (189 aa)). One can recognise an SH3 domain in the interval 744 to 803 (VEQIEAIAKFDYVGRSPRELSFKKGASLLLYHRASEDWWEGRHNGVDGLIPHQYIVVQDM). A compositionally biased stretch (polar residues) spans 809–820 (DSLSQKADSEAS). The interval 809–846 (DSLSQKADSEASSGPLLDDKASSKNDLQSPTEHISDYG) is disordered. 5 positions are modified to phosphoserine: Ser817, Ser820, Ser821, Ser837, and Ser858. The disordered stretch occupies residues 861-911 (AAIPRRRSGGDTHSPPRGLGPSIDTPPRAAACPSSPHKIPLSRGRIESPEK). Positions 952-987 (HKSLEAEALAEDIEKTMSTALHELRELERQNTVKQA) form a coiled coil. Residue Ser954 is modified to Phosphoserine. 2 disordered regions span residues 994–1014 (TLEPLKNPPGPISSEPASPLH) and 1045–1099 (ARLA…SGTM). Low complexity predominate over residues 1060-1074 (VRPVVQHRSSSSSSS). A compositionally biased stretch (polar residues) spans 1089–1099 (PNSSSDKSGTM).

Homodimer. Forms a heterooligomer with SRGAP1 and SRGAP2 through its F-BAR domain. Interacts with WASF1. Probably interacts with ROBO1. Interacts with FASLG.

Functionally, GTPase-activating protein for RAC1 and perhaps CDC42, but not for RhoA small GTPase. May attenuate RAC1 signaling in neurons. This Mus musculus (Mouse) protein is SLIT-ROBO Rho GTPase-activating protein 3 (Srgap3).